The following is a 616-amino-acid chain: MIQILLVIICLAVFPYQGCSIILGSGNVNDYEVVYPQKVTALPKGAVQQPEQKYEDAMQYEFEVKGEPVVLHLEKNKELFSEDYSETHYSSDDREITTNPSVEDHCYYHGRIQNDAESTASISACNGLKGHFKLRGETYFIEPLKIPDSEAHAVYKYENIENEDEAPKMCGVTQDNWESDEPIKKTLGLIVPPHERKFEKKFIELVVVVDHSMVTKYNNDSTAIRTWIYEMLNTVNEIYLPFNIRVALVGLEFWCNGDLINVTSTADDTLHSFGEWRASDLLNRKRHDHAQLLTNVTLDHSTLGITFVYGMCKSDRSVELILDYSNITFNMAYIIAHEMGHSLGMLHDTKFCTCGAKPCIMFGKESIPPPKEFSSCSYDQYNKYLLKYNPKCILDPPLRKDIASPAVCGNEIWEEGEECDCGSPADCRNPCCDAATCKLKPGAECGNGECCDKCKIRKAGTECRPARDDCDVAEHCTGQSAECPRNEFQRNGQPCLNNSGYCYNGDCPIMLNQCIALFSPSATVAQDSCFQRNLQGSYYGYCTKEIGYYGKRFPCAPQDVKCGRLYCLDNSFKKNMRCKNDYSYADENKGIVEPGTKCEDGKVCINRKCVDVNTAY.

An N-terminal signal peptide occupies residues 1-20; sequence MIQILLVIICLAVFPYQGCS. A propeptide spanning residues 21-190 is cleaved from the precursor; that stretch reads IILGSGNVND…EPIKKTLGLI (170 aa). Positions 201-397 constitute a Peptidase M12B domain; that stretch reads KFIELVVVVD…YNPKCILDPP (197 aa). Position 204 (Glu-204) interacts with Ca(2+). Asn-219 and Asn-261 each carry an N-linked (GlcNAc...) asparagine glycan. Ca(2+) is bound at residue Asp-288. N-linked (GlcNAc...) asparagine glycosylation is found at Asn-295 and Asn-326. 3 disulfides stabilise this stretch: Cys-312–Cys-392, Cys-352–Cys-376, and Cys-354–Cys-359. His-337 serves as a coordination point for Zn(2+). Glu-338 is an active-site residue. Residues His-341 and His-347 each contribute to the Zn(2+) site. Positions 392, 407, 410, 412, 414, 417, and 420 each coordinate Ca(2+). Residues 405–491 form the Disintegrin domain; it reads PAVCGNEIWE…ECPRNEFQRN (87 aa). 14 disulfides stabilise this stretch: Cys-408–Cys-437, Cys-419–Cys-432, Cys-421–Cys-427, Cys-431–Cys-454, Cys-445–Cys-451, Cys-450–Cys-476, Cys-463–Cys-483, Cys-470–Cys-502, Cys-495–Cys-507, Cys-514–Cys-567, Cys-529–Cys-578, Cys-542–Cys-555, Cys-562–Cys-604, and Cys-598–Cys-609. Residues 469 to 471 carry the D/ECD-tripeptide motif; sequence DCD. Ca(2+) is bound by residues Asp-471, Val-472, and Asn-486. The N-linked (GlcNAc...) asparagine glycan is linked to Asn-497.

It belongs to the venom metalloproteinase (M12B) family. P-III subfamily. P-IIIa sub-subfamily. In terms of assembly, monomer. It depends on Zn(2+) as a cofactor. As to expression, expressed by the venom gland.

It localises to the secreted. Snake venom zinc metalloproteinase that catalyzes the conversion of prothrombin (F2) to alpha-thrombin through formation of a thrombin intermediate, thereby functioning as a procoagulant protein. Has a low Km for prothrombin and a high kcat. Cleaves the 320-Arg-Ile-321 bond in prothrombin and produces meizothrombin which is ultimately converted to alpha-thrombin by autolysis. This Echis carinatus (Saw-scaled viper) protein is Zinc metalloproteinase-disintegrin-like ecarin.